The sequence spans 583 residues: CTP synthase (583 aa).

An amidoligase domain region spans residues Met-1–Leu-278. Position 20 (Ser-20) interacts with CTP. Position 20 (Ser-20) interacts with UTP. ATP contacts are provided by residues Ser-21 to Leu-26 and Asp-78. The Mg(2+) site is built by Asp-78 and Glu-152. CTP is bound by residues Asp-159 to Glu-161, Lys-199 to Gln-204, and Lys-235. UTP-binding positions include Lys-199–Gln-204 and Lys-235. Positions Arg-303–Gly-551 constitute a Glutamine amidotransferase type-1 domain. Gly-366 contacts L-glutamine. Cys-393 serves as the catalytic Nucleophile; for glutamine hydrolysis. L-glutamine-binding positions include Leu-394 to Gln-397, Glu-416, and Arg-477. Active-site residues include His-524 and Glu-526. Positions Pro-559 to Gly-583 are disordered.

Belongs to the CTP synthase family. In terms of assembly, homotetramer.

It catalyses the reaction UTP + L-glutamine + ATP + H2O = CTP + L-glutamate + ADP + phosphate + 2 H(+). The catalysed reaction is L-glutamine + H2O = L-glutamate + NH4(+). The enzyme catalyses UTP + NH4(+) + ATP = CTP + ADP + phosphate + 2 H(+). Its pathway is pyrimidine metabolism; CTP biosynthesis via de novo pathway; CTP from UDP: step 2/2. Allosterically activated by GTP, when glutamine is the substrate; GTP has no effect on the reaction when ammonia is the substrate. The allosteric effector GTP functions by stabilizing the protein conformation that binds the tetrahedral intermediate(s) formed during glutamine hydrolysis. Inhibited by the product CTP, via allosteric rather than competitive inhibition. Functionally, catalyzes the ATP-dependent amination of UTP to CTP with either L-glutamine or ammonia as the source of nitrogen. Regulates intracellular CTP levels through interactions with the four ribonucleotide triphosphates. The sequence is that of CTP synthase from Mycobacterium ulcerans (strain Agy99).